The primary structure comprises 390 residues: L-seryl-tRNA(Sec) selenium transferase (390 aa).

Lys225 bears the N6-(pyridoxal phosphate)lysine mark.

It belongs to the SelA family. Pyridoxal 5'-phosphate is required as a cofactor.

The protein localises to the cytoplasm. It carries out the reaction L-seryl-tRNA(Sec) + selenophosphate + H(+) = L-selenocysteinyl-tRNA(Sec) + phosphate. The protein operates within aminoacyl-tRNA biosynthesis; selenocysteinyl-tRNA(Sec) biosynthesis; selenocysteinyl-tRNA(Sec) from L-seryl-tRNA(Sec) (bacterial route): step 1/1. In terms of biological role, converts seryl-tRNA(Sec) to selenocysteinyl-tRNA(Sec) required for selenoprotein biosynthesis. This chain is L-seryl-tRNA(Sec) selenium transferase, found in Helicobacter pylori (strain J99 / ATCC 700824) (Campylobacter pylori J99).